Consider the following 435-residue polypeptide: MIGGLFIYNHKGEVLISRVYRDDIGRNAVDAFRVNVIHARQQVRSPVTNIARTSFFHVKRSNIWLAAVTKQNVNAAMVFEFLYKMCDVMTAYFGKISEENIKNNFVLIYELLDEILDFGYPQNSETGALKTFITQQGIKSQHQTKEEQSQITSQVTGQIGWRREGIKYRRNELFLDVLESVNLLMSPQGQVLSAHVSGRVVMKSYLSGMPECKFGMNDKIVIEKQGKGTADETGKTGKQSIAIDDCTFHQCVRLSKFDSERSISFIPPDGEFELMRYRTTKDIILPFRVIPLVREVGRTKLEVKVVIKSNFKPSLLAQKIEVRIPTPLNTSGVQVICMKGKAKYKASENAIVWKIKRMAGMKESQISAEIELLPTNDKKKWARPPISMNFEVPFAPSGLKVRYLKVFEPKLNYSDHDVIKWVRYIGRSGIYETRC.

Residues 170–434 (RNELFLDVLE…IGRSGIYETR (265 aa)) enclose the MHD domain. A 1,2-diacyl-sn-glycero-3-phospho-(1D-myo-inositol-3,4,5-trisphosphate) contacts are provided by lysine 341, lysine 345, and lysine 354.

The protein belongs to the adaptor complexes medium subunit family. In terms of assembly, adaptor protein complex 2 (AP-2) is a heterotetramer composed of two large adaptins (alpha-type subunit and beta-type subunit), a medium adaptin (mu-type subunit) and a small adaptin (sigma-type subunit).

The protein localises to the cell membrane. Its subcellular location is the membrane. It localises to the coated pit. Its function is as follows. Component of the adaptor complexes which link clathrin to receptors in coated vesicles. Clathrin-associated protein complexes are believed to interact with the cytoplasmic tails of membrane proteins, leading to their selection and concentration. AP50 is a subunit of the plasma membrane adaptor. The complex binds polyphosphoinositide-containing lipids. The sequence is that of AP-2 complex subunit mu (ap2m1) from Xenopus tropicalis (Western clawed frog).